The primary structure comprises 715 residues: Fatty acid oxidation complex subunit alpha (715 aa).

Residues 1-190 (MDMTSAFTLN…RVGLVDEVVP (190 aa)) are enoyl-CoA hydratase. The segment at 306 to 715 (GPLASVGVLG…WNSGETDLKE (410 aa)) is 3-hydroxyacyl-CoA dehydrogenase.

In the N-terminal section; belongs to the enoyl-CoA hydratase/isomerase family. This sequence in the central section; belongs to the 3-hydroxyacyl-CoA dehydrogenase family. Heterotetramer of two alpha chains (FadJ) and two beta chains (FadI).

It localises to the cytoplasm. The enzyme catalyses a (3S)-3-hydroxyacyl-CoA = a (2E)-enoyl-CoA + H2O. The catalysed reaction is a 4-saturated-(3S)-3-hydroxyacyl-CoA = a (3E)-enoyl-CoA + H2O. It catalyses the reaction a (3S)-3-hydroxyacyl-CoA + NAD(+) = a 3-oxoacyl-CoA + NADH + H(+). It carries out the reaction (3S)-3-hydroxybutanoyl-CoA = (3R)-3-hydroxybutanoyl-CoA. It participates in lipid metabolism; fatty acid beta-oxidation. Functionally, catalyzes the formation of a hydroxyacyl-CoA by addition of water on enoyl-CoA. Also exhibits 3-hydroxyacyl-CoA epimerase and 3-hydroxyacyl-CoA dehydrogenase activities. In Citrobacter koseri (strain ATCC BAA-895 / CDC 4225-83 / SGSC4696), this protein is Fatty acid oxidation complex subunit alpha.